The sequence spans 350 residues: Aminomethyltransferase (350 aa).

It belongs to the GcvT family. As to quaternary structure, the glycine cleavage system is composed of four proteins: P, T, L and H.

The enzyme catalyses N(6)-[(R)-S(8)-aminomethyldihydrolipoyl]-L-lysyl-[protein] + (6S)-5,6,7,8-tetrahydrofolate = N(6)-[(R)-dihydrolipoyl]-L-lysyl-[protein] + (6R)-5,10-methylene-5,6,7,8-tetrahydrofolate + NH4(+). Its function is as follows. The glycine cleavage system catalyzes the degradation of glycine. In Aquifex aeolicus (strain VF5), this protein is Aminomethyltransferase.